The chain runs to 494 residues: Glutamate--tRNA ligase (494 aa).

Positions 10 to 20 (PSPTGDPHVGT) match the 'HIGH' region motif. Residues Cys107, Cys109, Cys134, and His136 each coordinate Zn(2+). The 'KMSKS' region motif lies at 251–255 (KLSKR). Position 254 (Lys254) interacts with ATP.

The protein belongs to the class-I aminoacyl-tRNA synthetase family. Glutamate--tRNA ligase type 1 subfamily. In terms of assembly, monomer. It depends on Zn(2+) as a cofactor.

Its subcellular location is the cytoplasm. The catalysed reaction is tRNA(Glu) + L-glutamate + ATP = L-glutamyl-tRNA(Glu) + AMP + diphosphate. Functionally, catalyzes the attachment of glutamate to tRNA(Glu) in a two-step reaction: glutamate is first activated by ATP to form Glu-AMP and then transferred to the acceptor end of tRNA(Glu). The polypeptide is Glutamate--tRNA ligase (Pseudomonas aeruginosa (strain ATCC 15692 / DSM 22644 / CIP 104116 / JCM 14847 / LMG 12228 / 1C / PRS 101 / PAO1)).